A 509-amino-acid polypeptide reads, in one-letter code: Protein disulfide-isomerase (509 aa).

The N-terminal stretch at 1 to 19 (MLSRSLLCLALAWVARVGA) is a signal peptide. The region spanning 20-136 (DAPEEEDNVL…IVNWLKKRTG (117 aa)) is the Thioredoxin 1 domain. Residues C55 and C58 each act as nucleophile in the active site. The cysteines at positions 55 and 58 are disulfide-linked. At K202 the chain carries N6-acetyllysine. N6-succinyllysine occurs at positions 224 and 273. Phosphoserine is present on residues S333 and S359. The Thioredoxin 2 domain occupies 335 to 477 (ELTAEKITEF…FKKFLESGGQ (143 aa)). Residues C399 and C402 each act as nucleophile in the active site. Cysteines 399 and 402 form a disulfide. S429 carries the post-translational modification Phosphoserine. Residues 473-509 (ESGGQDGAGDDDDVDLEEALEPDMEEDDDQKAVKDEL) form a disordered region. The span at 480 to 501 (AGDDDDVDLEEALEPDMEEDDD) shows a compositional bias: acidic residues. Positions 506–509 (KDEL) match the Prevents secretion from ER motif.

Belongs to the protein disulfide isomerase family. As to quaternary structure, heterodimer; heterodimerizes with the protein microsomal triglyceride transfer MTTP. Homodimer. Homodimer. Monomers and homotetramers may also occur. Interacts with P4HA2, forming a heterotetramer consisting of 2 alpha subunits (P4HA2) and 2 beta (P4HB), where P4HB plays the role of a structural subunit; this tetramer catalyzes the formation of 4-hydroxyproline in collagen. Also constitutes the structural subunit of the microsomal triacylglycerol transfer protein MTTP in mammalian cells. Stabilizes both enzymes and retain them in the ER without contributing to the catalytic activity. Binds UBQLN1. Interacts with ERO1B. Interacts with ILDR2. Interacts with ERN1/IRE1A (via N-terminus); the interaction is enhanced by phosphorylation of P4HB by FAM20C in response to endoplasmic reticulum stress and results in attenuation of ERN1 activity. Phosphorylation of Ser-359 by FAM20C is induced by endoplasmic reticulum stress and results in a functional switch from oxidoreductase to molecular chaperone. It also promotes interaction with ERN1.

The protein localises to the endoplasmic reticulum. It localises to the endoplasmic reticulum lumen. Its subcellular location is the melanosome. The protein resides in the cell membrane. The enzyme catalyses Catalyzes the rearrangement of -S-S- bonds in proteins.. This multifunctional protein catalyzes the formation, breakage and rearrangement of disulfide bonds. At the cell surface, seems to act as a reductase that cleaves disulfide bonds of proteins attached to the cell. May therefore cause structural modifications of exofacial proteins. Inside the cell, seems to form/rearrange disulfide bonds of nascent proteins. At high concentrations and following phosphorylation by FAM20C, functions as a chaperone that inhibits aggregation of misfolded proteins. At low concentrations, facilitates aggregation (anti-chaperone activity). May be involved with other chaperones in the structural modification of the TG precursor in hormone biogenesis. Also acts as a structural subunit of various enzymes such as prolyl 4-hydroxylase and microsomal triacylglycerol transfer protein MTTP. Receptor for LGALS9; the interaction retains P4HB at the cell surface of Th2 T helper cells, increasing disulfide reductase activity at the plasma membrane, altering the plasma membrane redox state and enhancing cell migration. This is Protein disulfide-isomerase (P4HB) from Cricetulus griseus (Chinese hamster).